A 414-amino-acid polypeptide reads, in one-letter code: Probable serine/threonine-protein kinase PBL26 (414 aa).

The S-palmitoyl cysteine moiety is linked to residue Cys-3. A compositionally biased stretch (basic and acidic residues) spans 17 to 41 (RDSDNSYRRNGEVTGRDNNKTHPEN). The disordered stretch occupies residues 17–55 (RDSDNSYRRNGEVTGRDNNKTHPENPKTVNEQNKNNDED). The region spanning 79–356 (FRQECLIGEG…SDVVTALGFL (278 aa)) is the Protein kinase domain. ATP contacts are provided by residues 85–93 (IGEGGFGRV) and Lys-108. Tyr-153 carries the post-translational modification Phosphotyrosine. The active-site Proton acceptor is the Asp-206. Position 240 is a phosphoserine (Ser-240). The residue at position 246 (Thr-246) is a Phosphothreonine. A Phosphotyrosine modification is found at Tyr-254. Residues 364-394 (ISVPHYDDPPQPSDETSVEDSVAAEERERAV) form a disordered region.

Belongs to the protein kinase superfamily. Ser/Thr protein kinase family. Post-translationally, palmitoylation at Cys-3 and Cys-6 are required for plasma membrane location.

Its subcellular location is the cell membrane. The catalysed reaction is L-seryl-[protein] + ATP = O-phospho-L-seryl-[protein] + ADP + H(+). It catalyses the reaction L-threonyl-[protein] + ATP = O-phospho-L-threonyl-[protein] + ADP + H(+). In terms of biological role, may be involved in plant defense signaling. This Arabidopsis thaliana (Mouse-ear cress) protein is Probable serine/threonine-protein kinase PBL26.